A 184-amino-acid polypeptide reads, in one-letter code: ATP synthase subunit b (184 aa).

Residues 15–34 (VQPGLIFWTLVTFVIAAVVL) traverse the membrane as a helical segment.

Belongs to the ATPase B chain family. In terms of assembly, F-type ATPases have 2 components, F(1) - the catalytic core - and F(0) - the membrane proton channel. F(1) has five subunits: alpha(3), beta(3), gamma(1), delta(1), epsilon(1). F(0) has three main subunits: a(1), b(2) and c(10-14). The alpha and beta chains form an alternating ring which encloses part of the gamma chain. F(1) is attached to F(0) by a central stalk formed by the gamma and epsilon chains, while a peripheral stalk is formed by the delta and b chains.

It localises to the cell inner membrane. In terms of biological role, f(1)F(0) ATP synthase produces ATP from ADP in the presence of a proton or sodium gradient. F-type ATPases consist of two structural domains, F(1) containing the extramembraneous catalytic core and F(0) containing the membrane proton channel, linked together by a central stalk and a peripheral stalk. During catalysis, ATP synthesis in the catalytic domain of F(1) is coupled via a rotary mechanism of the central stalk subunits to proton translocation. Component of the F(0) channel, it forms part of the peripheral stalk, linking F(1) to F(0). The protein is ATP synthase subunit b of Myxococcus xanthus (strain DK1622).